Here is a 2535-residue protein sequence, read N- to C-terminus: Piezo-type mechanosensitive ion channel component 1 (2535 aa).

Helical transmembrane passes span 13–25, 29–44, and 59–81; these read LLLP…ASLL, ALSL…LPWL, and LLRA…QICL. N100 carries N-linked (GlcNAc...) asparagine glycosylation. The next 5 helical transmembrane spans lie at 122–138, 193–212, 215–234, 246–266, and 308–328; these read VAPD…CLGL, LLVT…AGIA, SAFS…WWSC, LCVM…CYQT, and WPIY…TSLL. The segment covering 346-357 has biased composition (acidic residues); the sequence is DEEHELELDQLE. The interval 346 to 377 is disordered; it reads DEEHELELDQLEPEPQARGTTQGATPTTTGPD. Residues 358–376 show a composition bias toward low complexity; sequence PEPQARGTTQGATPTTTGP. N380 is a glycosylation site (N-linked (GlcNAc...) asparagine). 8 helical membrane-spanning segments follow: residues 416–436, 439–454, 460–482, 510–527, 572–592, 594–614, 625–646, and 677–693; these read LILD…SIMY, WLTF…IWTV, LAML…RYVW, CLDL…WLLL, IYVK…SFAG, LVVY…LFQV, VFWW…TFQF, and LFSS…ACIL. The residue at position 749 (S749) is a Phosphoserine. 12 consecutive transmembrane segments (helical) span residues 803–814, 818–831, 846–860, 913–940, 981–996, 999–1014, 1028–1043, 1083–1104, 1140–1166, 1172–1190, 1204–1222, and 1272–1288; these read LVALYTVWVALK, VMNL…AFAL, VWTC…LYQL, GYIQ…HYRR, GLEI…IGQR, FMVI…ILTR, CLFL…LLCL, TNLI…VFSA, YLDM…TGAT, GLGY…TTLL, LILY…SLLS, and IWDS…RRVF. Residues 1325 to 1356 are a coiled coil; the sequence is HRQTEERSLAQLKRQMKRIRAKQEKYRQSQAS. Disordered stretches follow at residues 1345-1383 and 1556-1597; these read AKQE…RTQW and SGPV…NTRS. Polar residues predominate over residues 1352-1365; sequence QSQASRGQLQSTDP. A phosphoserine mark is found at S1372 and S1377. The span at 1579-1597 shows a compositional bias: polar residues; that stretch reads SSMTDDTGSPLSTGYNTRS. 3 positions are modified to phosphoserine: S1614, S1618, and S1633. 4 helical membrane-spanning segments follow: residues 1644-1687, 1692-1707, 1716-1734, and 1767-1788; these read PELE…LNHM, AASL…WAML, FWMT…KYLF, and DSYI…SQLL. 2 stretches are compositionally biased toward basic and acidic residues: residues 1801–1811 and 1842–1867; these read PKDHCRSSEKD and PKDH…DLKP. The disordered stretch occupies residues 1801–1911; sequence PKDHCRSSEK…GREAAGRKRL (111 aa). Basic residues predominate over residues 1868 to 1881; sequence QHRRHISIRFRRRK. The next 5 membrane-spanning stretches (helical) occupy residues 1965 to 1984, 2005 to 2021, 2036 to 2056, 2065 to 2080, and 2181 to 2201; these read YALM…FGFW, PQAF…TMVI, AFQV…LPAV, AVAQ…YFAL, and GLII…MSLI. C2425 and C2429 are oxidised to a cystine. A helical transmembrane segment spans residues 2446–2466; the sequence is LGFLAGYGIVGLYVSIVLVVG.

This sequence belongs to the PIEZO (TC 1.A.75) family. In terms of assembly, homotrimer; the homotrimer forms a propeller-shaped Piezo channel with a cation-ion conducting pore. Heterotrimeric interaction may occur between PIEZO1 and PIEZO2. Interacts with PKD2. Interacts with STOM13. Interacts with TMC1, TMC2, PCDH15 and CIB2; the interaction may be part of the MET complex. Interacts with MDFIC (via C-terminus); the interaction prolongs Piezo channel inactivation. Interacts with MDFI (via C-terminus); the interaction prolongs Piezo channel inactivation. As to expression, moderate expression in lung and kidney. Very weak expression in heart, spleen and liver.

The protein localises to the endoplasmic reticulum membrane. The protein resides in the endoplasmic reticulum-Golgi intermediate compartment membrane. Its subcellular location is the cell membrane. It is found in the cell projection. It localises to the lamellipodium membrane. The enzyme catalyses K(+)(in) = K(+)(out). It catalyses the reaction Na(+)(in) = Na(+)(out). It carries out the reaction Ca(2+)(in) = Ca(2+)(out). The catalysed reaction is Mg(2+)(in) = Mg(2+)(out). With respect to regulation, regulated by auxillary subunits MDFIC and MDFI. Down-regulated by phosphatidylserines exposed on the cell surface. Divalent ions decrease the single-channel permeability of K(+). Pore-forming subunit of the mechanosensitive non-specific cation Piezo channel required for rapidly adapting mechanically activated (MA) currents and has a key role in sensing touch and tactile pain. Piezo channels are homotrimeric three-blade propeller-shaped structures that utilize a cap-motion and plug-and-latch mechanism to gate their ion-conducting pathways. Generates currents characterized by a linear current-voltage relationship that are sensitive to ruthenium red and gadolinium. Conductance to monovalent alkali ions is highest for K(+), intermediate for Na(+) and lowest for Li(+). Divalent ions except for Mn(2+) permeate the channel but more slowly than the monovalent ions and they also reduce K(+) currents. Plays a key role in epithelial cell adhesion by maintaining integrin activation through R-Ras recruitment to the ER, most probably in its activated state, and subsequent stimulation of calpain signaling. In inner ear hair cells, PIEZO1/2 subunits may constitute part of the mechanotransducer (MET) non-selective cation channel complex where they may act as pore-forming ion-conducting component in the complex. In the kidney, may contribute to the detection of intraluminal pressure changes and to urine flow sensing. Acts as a shear-stress sensor that promotes endothelial cell organization and alignment in the direction of blood flow through calpain activation. Plays a key role in blood vessel formation and vascular structure in both development and adult physiology. Acts as a sensor of phosphatidylserine (PS) flipping at the plasma membrane and governs morphogenesis of muscle cells. In myoblasts, flippase-mediated PS enrichment at the inner leaflet of plasma membrane triggers channel activation and Ca(2+) influx followed by Rho GTPases signal transduction, leading to assembly of cortical actomyosin fibers and myotube formation. In Rattus norvegicus (Rat), this protein is Piezo-type mechanosensitive ion channel component 1 (Piezo1).